The sequence spans 618 residues: MFDLEYQLKNLPDKPGVYLMKNNLGEIIYVGKAKILKNRVRQYFQKSQKHSEKVKAMVKNIEEFEYIITDSEIEALILECNLIKKYRPKYNILLKDDKHYPFIKVTLAEDFPRVISTRKVTKDGSKYFGPYVDGSSVKDIIELIKKTFPIRTCKKNIVEGAKAIRPCLNYQIGLCKAPCAQYIKKSEYREIIDDVIKLLSGKHLDIVENFKLNMEKAAENLEFEKAAMLRDKINIIEKIGEKQKIILNNFDNEDYISLYSDGKDTCFQVFFLRNGKIVGREHFIIEDTFDTNSSTLISNFLKEFYGGTAYIPKTIYVPNIEDEALLEQWLTLKKESKSTIKIPIKGEKKNILDLVEKNAKTTLENFKLKYLQEKALYDNVLKDLKNILSLQEEPIRIEAFDISNIQGFDSVGSMVVFEKGRAKPSDYRRFKISTVKGADDYKSMKEILTRRFQHGLSEIKSIQDRKLEFSSGKFSVFPDLILMDGGKGQINIALEVLNTFNIDIPVCGMVKDNKHRTRGLIYNGEEIIINKYGSVMKFITRVQDEVHRFAISYHRSLRGKNSFHSLLDDIPNIGEKRKKDLLFNFKSIDNIKKATYEELLSIPSMDKKSAESVLEFFK.

The GIY-YIG domain maps to aspartate 13–isoleucine 92. The 36-residue stretch at leucine 204–isoleucine 239 folds into the UVR domain.

Belongs to the UvrC family. Interacts with UvrB in an incision complex.

The protein localises to the cytoplasm. Its function is as follows. The UvrABC repair system catalyzes the recognition and processing of DNA lesions. UvrC both incises the 5' and 3' sides of the lesion. The N-terminal half is responsible for the 3' incision and the C-terminal half is responsible for the 5' incision. The chain is UvrABC system protein C from Clostridium botulinum (strain Loch Maree / Type A3).